Consider the following 396-residue polypeptide: Tryptophan synthase beta chain (396 aa).

Position 86 is an N6-(pyridoxal phosphate)lysine (Lys-86).

The protein belongs to the TrpB family. Tetramer of two alpha and two beta chains. Pyridoxal 5'-phosphate is required as a cofactor.

The catalysed reaction is (1S,2R)-1-C-(indol-3-yl)glycerol 3-phosphate + L-serine = D-glyceraldehyde 3-phosphate + L-tryptophan + H2O. It functions in the pathway amino-acid biosynthesis; L-tryptophan biosynthesis; L-tryptophan from chorismate: step 5/5. The beta subunit is responsible for the synthesis of L-tryptophan from indole and L-serine. The protein is Tryptophan synthase beta chain of Vibrio cholerae serotype O1 (strain ATCC 39315 / El Tor Inaba N16961).